Consider the following 765-residue polypeptide: Zinc metalloproteinase nas-37 (765 aa).

The signal sequence occupies residues 1–22 (MKSQACLKVCLALIGLVSIVST). The propeptide occupies 23–114 (AYIANDVVSD…SESNSPRSRR (92 aa)). The Peptidase M12A domain occupies 115–308 (QAHPDPRNFW…AKMINTRYCS (194 aa)). Asn126 is a glycosylation site (N-linked (GlcNAc...) asparagine). Disulfide bonds link Cys156-Cys307, Cys177-Cys196, Cys311-Cys331, Cys333-Cys342, Cys350-Cys374, and Cys400-Cys420. Residue His204 coordinates Zn(2+). Residue Glu205 is part of the active site. Zn(2+) contacts are provided by His208 and His214. In terms of domain architecture, EGF-like spans 303-343 (NTRYCSNVCQRSLPCLNEGYTDPNNCGRCRCPSGYGGTYCE). In terms of domain architecture, CUB spans 350–458 (CGGSLTASSS…RGFTLKYRAI (109 aa)). The segment at 513–573 (KYSSEELYDP…TRPTPTTTVA (61 aa)) is disordered. Low complexity-rich tracts occupy residues 526-545 (LSPS…DASP) and 562-573 (ALTRPTPTTTVA). The TSP type-1 domain maps to 576–627 (TASWSAWGEWSACSQPCGGCGTKTRVRACYGGNQVCPGSNLDRESCNAHACA). Cystine bridges form between Cys588-Cys621, Cys592-Cys626, and Cys604-Cys611.

Zn(2+) is required as a cofactor. In terms of tissue distribution, expressed in hypodermal cells. Not expressed in the seam cells in L1 to L3 larvae, but it is present in seam cells of L4 larvae. Also expressed in attachment points of the cuticle at the anterior end of larvae, in the arcade cells in the mouth, the anterior pharynx, the amphid socket cells, and in the rectal epithelial cells at the posterior end of the larvae (at protein level).

The protein localises to the secreted. Functionally, metalloprotease. Plays an essential role in molting, a process during larval stages in which a new cuticle is formed and the old cuticle is shed. Required during ecdysis, the opening of the cuticle to allow the worm to escape. The sequence is that of Zinc metalloproteinase nas-37 (nas-37) from Caenorhabditis elegans.